The primary structure comprises 178 residues: ATP-dependent protease subunit HslV (178 aa).

Thr-8 is an active-site residue. Na(+) is bound by residues Gly-163, Cys-166, and Thr-169.

Belongs to the peptidase T1B family. HslV subfamily. A double ring-shaped homohexamer of HslV is capped on each side by a ring-shaped HslU homohexamer. The assembly of the HslU/HslV complex is dependent on binding of ATP.

It is found in the cytoplasm. It catalyses the reaction ATP-dependent cleavage of peptide bonds with broad specificity.. With respect to regulation, allosterically activated by HslU binding. In terms of biological role, protease subunit of a proteasome-like degradation complex believed to be a general protein degrading machinery. The chain is ATP-dependent protease subunit HslV from Xylella fastidiosa (strain 9a5c).